Reading from the N-terminus, the 394-residue chain is Elongation factor Tu (394 aa).

The region spanning 10–204 (KPHVNVGTIG…ALDSYIPTPE (195 aa)) is the tr-type G domain. A G1 region spans residues 19–26 (GHVDHGKT). A GTP-binding site is contributed by 19 to 26 (GHVDHGKT). Thr26 serves as a coordination point for Mg(2+). The G2 stretch occupies residues 60-64 (GITIN). A G3 region spans residues 81–84 (DCPG). GTP-binding positions include 81–85 (DCPGH) and 136–139 (NKCD). Positions 136-139 (NKCD) are G4. Residues 174–176 (SAL) form a G5 region.

It belongs to the TRAFAC class translation factor GTPase superfamily. Classic translation factor GTPase family. EF-Tu/EF-1A subfamily. In terms of assembly, monomer.

The protein resides in the cytoplasm. It catalyses the reaction GTP + H2O = GDP + phosphate + H(+). GTP hydrolase that promotes the GTP-dependent binding of aminoacyl-tRNA to the A-site of ribosomes during protein biosynthesis. This chain is Elongation factor Tu, found in Neisseria meningitidis serogroup A / serotype 4A (strain DSM 15465 / Z2491).